The chain runs to 67 residues: uncharacterized protein (67 aa).

A coiled-coil region spans residues 17 to 47 (AASLQELEKKINTQIENNKAIMLRVKSVSHQ).

This is an uncharacterized protein from Bacillus subtilis (strain 168).